Reading from the N-terminus, the 401-residue chain is Large ribosomal subunit protein uL4B (401 aa).

Basic and acidic residues predominate over residues 351-373; it reads IKAKEKKPDDGKPKAKKPLDAKT. The segment at 351-401 is disordered; sequence IKAKEKKPDDGKPKAKKPLDAKTKMIKLAKAKKRQARAEAKTAEAKTAESK. Residues 374–385 show a composition bias toward basic residues; that stretch reads KMIKLAKAKKRQ. The segment covering 386 to 401 has biased composition (basic and acidic residues); it reads ARAEAKTAEAKTAESK.

Belongs to the universal ribosomal protein uL4 family. As to quaternary structure, component of the large ribosomal subunit.

The protein resides in the cytoplasm. Component of the large ribosomal subunit. The ribosome is a large ribonucleoprotein complex responsible for the synthesis of proteins in the cell. The sequence is that of Large ribosomal subunit protein uL4B (rpl4-b) from Xenopus laevis (African clawed frog).